Reading from the N-terminus, the 79-residue chain is MSLEDDVIAIIVEQLGVDPKEVNENSSFIEDLNADSLDLTELIMTLEEKFAFEISEEDAEKLRTVGDVFTYIKKRQAEQ.

Residues 1–76 (MSLEDDVIAI…DVFTYIKKRQ (76 aa)) form the Carrier domain. Ser-36 carries the post-translational modification O-(pantetheine 4'-phosphoryl)serine.

It belongs to the acyl carrier protein (ACP) family. Post-translationally, 4'-phosphopantetheine is transferred from CoA to a specific serine of apo-ACP by AcpS. This modification is essential for activity because fatty acids are bound in thioester linkage to the sulfhydryl of the prosthetic group.

Its subcellular location is the cytoplasm. It participates in lipid metabolism; fatty acid biosynthesis. Its function is as follows. Carrier of the growing fatty acid chain in fatty acid biosynthesis. This is Acyl carrier protein from Chlamydia pneumoniae (Chlamydophila pneumoniae).